A 94-amino-acid chain; its full sequence is Integration host factor subunit beta (94 aa).

Belongs to the bacterial histone-like protein family. In terms of assembly, heterodimer of an alpha and a beta chain.

Functionally, this protein is one of the two subunits of integration host factor, a specific DNA-binding protein that functions in genetic recombination as well as in transcriptional and translational control. The polypeptide is Integration host factor subunit beta (Escherichia coli (strain UTI89 / UPEC)).